The sequence spans 617 residues: Probable LRR receptor-like serine/threonine-protein kinase RKF3 (617 aa).

The first 20 residues, 1 to 20, serve as a signal peptide directing secretion; sequence MLFLRRIAVVFFVFTSFSAA. The Extracellular segment spans residues 21–212; that stretch reads QNSTCPLDFS…PTSSGANKVK (192 aa). N-linked (GlcNAc...) asparagine glycans are attached at residues Asn-22, Asn-124, Asn-135, and Asn-165. A helical membrane pass occupies residues 213–233; that stretch reads VLVSSFSVLLVASVLVITAWF. The Cytoplasmic segment spans residues 234 to 617; sequence WYCRRKKSKL…DGPSGNTNTT (384 aa). One can recognise a Protein kinase domain in the interval 283-563; that stretch reads FSRHNIIGRG…VKMLESNEFT (281 aa). ATP-binding positions include 289-297 and Lys-311; that span reads IGRGGYGNV. Asp-412 (proton acceptor) is an active-site residue. The interval 585-617 is disordered; it reads VSSSSGSGKLTSPTGYQAFSFGGDGPSGNTNTT.

The protein belongs to the protein kinase superfamily. Ser/Thr protein kinase family. As to expression, expressed in the whole plant at low levels.

The protein resides in the cell membrane. The catalysed reaction is L-seryl-[protein] + ATP = O-phospho-L-seryl-[protein] + ADP + H(+). The enzyme catalyses L-threonyl-[protein] + ATP = O-phospho-L-threonyl-[protein] + ADP + H(+). The protein is Probable LRR receptor-like serine/threonine-protein kinase RKF3 (RKF3) of Arabidopsis thaliana (Mouse-ear cress).